We begin with the raw amino-acid sequence, 214 residues long: Phosphatidylserine decarboxylase proenzyme (214 aa).

Ser-182 acts as the Schiff-base intermediate with substrate; via pyruvic acid in catalysis. Residue Ser-182 is modified to Pyruvic acid (Ser); by autocatalysis.

The protein belongs to the phosphatidylserine decarboxylase family. PSD-A subfamily. As to quaternary structure, heterodimer of a large membrane-associated beta subunit and a small pyruvoyl-containing alpha subunit. The cofactor is pyruvate. Post-translationally, is synthesized initially as an inactive proenzyme. Formation of the active enzyme involves a self-maturation process in which the active site pyruvoyl group is generated from an internal serine residue via an autocatalytic post-translational modification. Two non-identical subunits are generated from the proenzyme in this reaction, and the pyruvate is formed at the N-terminus of the alpha chain, which is derived from the carboxyl end of the proenzyme. The post-translation cleavage follows an unusual pathway, termed non-hydrolytic serinolysis, in which the side chain hydroxyl group of the serine supplies its oxygen atom to form the C-terminus of the beta chain, while the remainder of the serine residue undergoes an oxidative deamination to produce ammonia and the pyruvoyl prosthetic group on the alpha chain.

It is found in the cell membrane. The enzyme catalyses a 1,2-diacyl-sn-glycero-3-phospho-L-serine + H(+) = a 1,2-diacyl-sn-glycero-3-phosphoethanolamine + CO2. The protein operates within phospholipid metabolism; phosphatidylethanolamine biosynthesis; phosphatidylethanolamine from CDP-diacylglycerol: step 2/2. Functionally, catalyzes the formation of phosphatidylethanolamine (PtdEtn) from phosphatidylserine (PtdSer). The chain is Phosphatidylserine decarboxylase proenzyme from Burkholderia lata (strain ATCC 17760 / DSM 23089 / LMG 22485 / NCIMB 9086 / R18194 / 383).